We begin with the raw amino-acid sequence, 232 residues long: Large ribosomal subunit protein uL1 (232 aa).

Belongs to the universal ribosomal protein uL1 family. Part of the 50S ribosomal subunit.

Binds directly to 23S rRNA. The L1 stalk is quite mobile in the ribosome, and is involved in E site tRNA release. In terms of biological role, protein L1 is also a translational repressor protein, it controls the translation of the L11 operon by binding to its mRNA. In Chlamydia trachomatis serovar L2b (strain UCH-1/proctitis), this protein is Large ribosomal subunit protein uL1.